Consider the following 443-residue polypeptide: UPF0597 protein DVU_0440 (443 aa).

It belongs to the UPF0597 family.

The chain is UPF0597 protein DVU_0440 from Nitratidesulfovibrio vulgaris (strain ATCC 29579 / DSM 644 / CCUG 34227 / NCIMB 8303 / VKM B-1760 / Hildenborough) (Desulfovibrio vulgaris).